We begin with the raw amino-acid sequence, 122 residues long: uncharacterized protein (122 aa).

Positions 1–15 (MAEPGGRGDYHKDGR) are enriched in basic and acidic residues. A disordered region spans residues 1–26 (MAEPGGRGDYHKDGRPPSLSRSPLFT).

This is an uncharacterized protein from Macaca fascicularis (Crab-eating macaque).